A 194-amino-acid chain; its full sequence is Leucyl/phenylalanyl-tRNA--protein transferase (194 aa).

This sequence belongs to the L/F-transferase family.

The protein resides in the cytoplasm. It carries out the reaction N-terminal L-lysyl-[protein] + L-leucyl-tRNA(Leu) = N-terminal L-leucyl-L-lysyl-[protein] + tRNA(Leu) + H(+). It catalyses the reaction N-terminal L-arginyl-[protein] + L-leucyl-tRNA(Leu) = N-terminal L-leucyl-L-arginyl-[protein] + tRNA(Leu) + H(+). The catalysed reaction is L-phenylalanyl-tRNA(Phe) + an N-terminal L-alpha-aminoacyl-[protein] = an N-terminal L-phenylalanyl-L-alpha-aminoacyl-[protein] + tRNA(Phe). Its function is as follows. Functions in the N-end rule pathway of protein degradation where it conjugates Leu, Phe and, less efficiently, Met from aminoacyl-tRNAs to the N-termini of proteins containing an N-terminal arginine or lysine. The protein is Leucyl/phenylalanyl-tRNA--protein transferase of Chlorobium limicola (strain DSM 245 / NBRC 103803 / 6330).